A 260-amino-acid chain; its full sequence is Indole-3-glycerol phosphate synthase (260 aa).

This sequence belongs to the TrpC family.

The catalysed reaction is 1-(2-carboxyphenylamino)-1-deoxy-D-ribulose 5-phosphate + H(+) = (1S,2R)-1-C-(indol-3-yl)glycerol 3-phosphate + CO2 + H2O. It functions in the pathway amino-acid biosynthesis; L-tryptophan biosynthesis; L-tryptophan from chorismate: step 4/5. In Staphylococcus aureus (strain MRSA252), this protein is Indole-3-glycerol phosphate synthase.